Consider the following 223-residue polypeptide: MSERKAFVSRITNETKIQIAISLNGGHIEIKDSILCKKQQENGSDVAAQTTKSQVIDIQTGVGFLDHMIHALAKHSGWSLIVECIGDLHIDDHHTTEDCGIALGQAFKEALGQVRGVKRFGTGFAPLDEALSRAVVDLSNRPYAVIDLGLKREKIGDLSTEMIPHFLESFAEAARLTIHVDCLRGFNDHHRSESAFKALAVAIRESLAPNGTNDVPSTKGVLM.

It belongs to the imidazoleglycerol-phosphate dehydratase family.

It carries out the reaction D-erythro-1-(imidazol-4-yl)glycerol 3-phosphate = 3-(imidazol-4-yl)-2-oxopropyl phosphate + H2O. Its pathway is amino-acid biosynthesis; L-histidine biosynthesis; L-histidine from 5-phospho-alpha-D-ribose 1-diphosphate: step 6/9. The protein is Imidazoleglycerol-phosphate dehydratase (HIS3) of Torulaspora delbrueckii (Yeast).